Here is a 121-residue protein sequence, read N- to C-terminus: uncharacterized protein (121 aa).

Residues 1 to 121 (MGQVLSICSS…QQEREQIKWD (121 aa)) form a disordered region. G2 carries the N-myristoyl glycine lipid modification. Residue C8 is the site of S-palmitoyl cysteine attachment. Composition is skewed to basic and acidic residues over residues 11-23 (KSKEKKVVNEKPT), 73-83 (AAEKRNIEKKK), 90-105 (RQLEKERAKPMKEHLQ), and 112-121 (QQEREQIKWD).

It to yeast YGL108C. Myristoylated. In terms of processing, the N-myristoylated protein is further palmitoylated.

The protein localises to the cytoplasm. It is found in the cytosol. This is an uncharacterized protein from Schizosaccharomyces pombe (strain 972 / ATCC 24843) (Fission yeast).